Reading from the N-terminus, the 263-residue chain is Small ribosomal subunit protein uS3 (263 aa).

One can recognise a KH type-2 domain in the interval 40–108; that stretch reads IRNYLFKKFH…HIKVDVDVLE (69 aa). Residues 224-263 form a disordered region; that stretch reads KPKGSEANHQRRNSNKSKDYRDNKNKQFNKNHQNQQPAKE. Over residues 239-248 the composition is skewed to basic and acidic residues; that stretch reads KSKDYRDNKN. The segment covering 249 to 263 has biased composition (low complexity); that stretch reads KQFNKNHQNQQPAKE.

It belongs to the universal ribosomal protein uS3 family. Part of the 30S ribosomal subunit. Forms a tight complex with proteins S10 and S14.

Functionally, binds the lower part of the 30S subunit head. Binds mRNA in the 70S ribosome, positioning it for translation. The sequence is that of Small ribosomal subunit protein uS3 from Mycoplasmoides gallisepticum (strain R(low / passage 15 / clone 2)) (Mycoplasma gallisepticum).